We begin with the raw amino-acid sequence, 445 residues long: UDP-N-acetylmuramoylalanine--D-glutamate ligase (445 aa).

Residue 118 to 124 (GTNGKTT) coordinates ATP.

Belongs to the MurCDEF family.

It localises to the cytoplasm. It catalyses the reaction UDP-N-acetyl-alpha-D-muramoyl-L-alanine + D-glutamate + ATP = UDP-N-acetyl-alpha-D-muramoyl-L-alanyl-D-glutamate + ADP + phosphate + H(+). The protein operates within cell wall biogenesis; peptidoglycan biosynthesis. Functionally, cell wall formation. Catalyzes the addition of glutamate to the nucleotide precursor UDP-N-acetylmuramoyl-L-alanine (UMA). This is UDP-N-acetylmuramoylalanine--D-glutamate ligase from Macrococcus caseolyticus (strain JCSC5402) (Macrococcoides caseolyticum).